The following is a 102-amino-acid chain: Large ribosomal subunit protein uL24 (102 aa).

The protein belongs to the universal ribosomal protein uL24 family. In terms of assembly, part of the 50S ribosomal subunit.

In terms of biological role, one of two assembly initiator proteins, it binds directly to the 5'-end of the 23S rRNA, where it nucleates assembly of the 50S subunit. One of the proteins that surrounds the polypeptide exit tunnel on the outside of the subunit. The chain is Large ribosomal subunit protein uL24 from Cupriavidus metallidurans (strain ATCC 43123 / DSM 2839 / NBRC 102507 / CH34) (Ralstonia metallidurans).